The sequence spans 314 residues: Pectin lyase (314 aa).

R202 is a catalytic residue.

It belongs to the polysaccharide lyase 1 family.

The enzyme catalyses Eliminative cleavage of (1-&gt;4)-alpha-D-galacturonan methyl ester to give oligosaccharides with 4-deoxy-6-O-methyl-alpha-D-galact-4-enuronosyl groups at their non-reducing ends.. The polypeptide is Pectin lyase (pnl) (Pectobacterium carotovorum (Erwinia carotovora)).